The following is a 307-amino-acid chain: Dihydroorotate dehydrogenase B (NAD(+)), catalytic subunit (307 aa).

Residues Ser22 and Lys46 to Ala47 contribute to the FMN site. Substrate-binding positions include Lys46 and Asn70 to Leu74. Residues Asn102 and Asn130 each contribute to the FMN site. Residue Asn130 participates in substrate binding. Residue Cys133 is the Nucleophile of the active site. FMN contacts are provided by Lys168 and Ile194. Asn195–Thr196 lines the substrate pocket. FMN-binding positions include Gly220, Gly246–Gly247, and Gly268–Thr269.

Belongs to the dihydroorotate dehydrogenase family. Type 1 subfamily. In terms of assembly, heterotetramer of 2 PyrK and 2 PyrD type B subunits. Requires FMN as cofactor.

It localises to the cytoplasm. It catalyses the reaction (S)-dihydroorotate + NAD(+) = orotate + NADH + H(+). Its pathway is pyrimidine metabolism; UMP biosynthesis via de novo pathway; orotate from (S)-dihydroorotate (NAD(+) route): step 1/1. Its function is as follows. Catalyzes the conversion of dihydroorotate to orotate with NAD(+) as electron acceptor. This chain is Dihydroorotate dehydrogenase B (NAD(+)), catalytic subunit (pyrD), found in Latilactobacillus sakei subsp. sakei (strain 23K) (Lactobacillus sakei subsp. sakei).